Reading from the N-terminus, the 846-residue chain is Sucrose synthase 6 (846 aa).

The tract at residues 276–755 (CVFTVVIFSI…GLQRIYECYT (480 aa)) is GT-B glycosyltransferase.

The protein belongs to the glycosyltransferase 1 family. Plant sucrose synthase subfamily.

It catalyses the reaction an NDP-alpha-D-glucose + D-fructose = a ribonucleoside 5'-diphosphate + sucrose + H(+). In terms of biological role, sucrose-cleaving enzyme that provides UDP-glucose and fructose for various metabolic pathways. The sequence is that of Sucrose synthase 6 (SUS6) from Oryza sativa subsp. japonica (Rice).